The chain runs to 699 residues: MSAQGDCEFLVQRAREWLITARSLYPADFNIQYEMYTIERNAERTATAGRLLYDMFVNFPDQPVVWREISIIISALRNDSQDKQTQFLRSLFETLPGRVQCEMLLKVTEQCFNTLERSEMLLLLLRRFPETVVQHGVGLGEALLEAETIEEQESPVNCFRKLFVCDVLPLIINNHDVRLPANLLYKYLNKAAEFYINYVTRSTQTENQHQGAQDTSDLMSPSKRSSQKYIIEGLTEKSSQIVDPWERLFKILNVVGMRCEWQMDKGRRSYGDILHRMKDLCRYMNNFDSEAHAKYKNQVVYSTMLVFFKNAFQYVNSIQPSLFQGPNAPSQVPLVLLEDVSNVYGDVEIDRNKHIHKKRKLAEGREKTMSPDDEDCSAKGRNRHIVVNKAELANSIEVLESFKLARESWELLYSLEFLDKEFTRICLAWKTDTWLWLRIFLTDMIIYQGQYKKAIASLHHLAALQGSISQPQITGQGTLEHQRALIQLATCHFALGEYRMTCEKVLDLMCYMVLPIQDGGKSQEEPSKVKPKFRKGSDLKLLPCTSKAIMPYCLHLMLACFKLRAFTDNRDDMALGHVIVLLQQEWPRGENLFLKAVNKICQQGNFQYENFFNYVTNIDMLEEFAYLRTQEGGKIHLELLPNQGMLIKHHTVTRGITKGVKEDFRLAMERQVSRCGENLMVVLHRFCINEKILLLQTLT.

Ser220 and Ser370 each carry phosphoserine. Residue Lys453 forms a Glycyl lysine isopeptide (Lys-Gly) (interchain with G-Cter in SUMO2) linkage.

This sequence belongs to the Integrator subunit 10 family. Component of the Integrator complex, composed of core subunits INTS1, INTS2, INTS3, INTS4, INTS5, INTS6, INTS7, INTS8, INTS9/RC74, INTS10, INTS11/CPSF3L, INTS12, INTS13, INTS14 and INTS15. The core complex associates with protein phosphatase 2A subunits PPP2CA and PPP2R1A, to form the Integrator-PP2A (INTAC) complex. INTS10 is part of the tail subcomplex, composed of INTS10, INTS13, INTS14 and INTS15.

It is found in the nucleus. Component of the integrator complex, a multiprotein complex that terminates RNA polymerase II (Pol II) transcription in the promoter-proximal region of genes. The integrator complex provides a quality checkpoint during transcription elongation by driving premature transcription termination of transcripts that are unfavorably configured for transcriptional elongation: the complex terminates transcription by (1) catalyzing dephosphorylation of the C-terminal domain (CTD) of Pol II subunit POLR2A/RPB1 and SUPT5H/SPT5, (2) degrading the exiting nascent RNA transcript via endonuclease activity and (3) promoting the release of Pol II from bound DNA. The integrator complex is also involved in terminating the synthesis of non-coding Pol II transcripts, such as enhancer RNAs (eRNAs), small nuclear RNAs (snRNAs), telomerase RNAs and long non-coding RNAs (lncRNAs). Within the integrator complex, INTS10 is part of the integrator tail module that acts as a platform for the recruitment of transcription factors at promoters. May be not involved in the recruitment of cytoplasmic dynein to the nuclear envelope, probably as component of the integrator complex. In Macaca fascicularis (Crab-eating macaque), this protein is Integrator complex subunit 10 (INTS10).